Here is a 134-residue protein sequence, read N- to C-terminus: Small ribosomal subunit protein uS11 (134 aa).

The segment at 1–24 (MATKMAGVKRAGRKRKERKNIERG) is disordered.

This sequence belongs to the universal ribosomal protein uS11 family. As to quaternary structure, part of the 30S ribosomal subunit. Interacts with proteins S7 and S18. Binds to IF-3.

In terms of biological role, located on the platform of the 30S subunit, it bridges several disparate RNA helices of the 16S rRNA. Forms part of the Shine-Dalgarno cleft in the 70S ribosome. The chain is Small ribosomal subunit protein uS11 from Acetivibrio thermocellus (strain ATCC 27405 / DSM 1237 / JCM 9322 / NBRC 103400 / NCIMB 10682 / NRRL B-4536 / VPI 7372) (Clostridium thermocellum).